The primary structure comprises 704 residues: Myb-related protein B (704 aa).

HTH myb-type domains follow at residues R26 to L77, N78 to V133, and K134 to V184. The H-T-H motif DNA-binding region spans W54–L77. K104 is covalently cross-linked (Glycyl lysine isopeptide (Lys-Gly) (interchain with G-Cter in SUMO2)). DNA-binding regions (H-T-H motif) lie at residues W106–L129 and W157–I180. Residue K197 forms a Glycyl lysine isopeptide (Lys-Gly) (interchain with G-Cter in SUMO2) linkage. Position 267 is a phosphothreonine (T267). K275 is covalently cross-linked (Glycyl lysine isopeptide (Lys-Gly) (interchain with G-Cter in SUMO2)). S282 carries the phosphoserine modification. The tract at residues L325–V412 is disordered. Over residues S339–T366 the composition is skewed to low complexity. At S396 the chain carries Phosphoserine. K414 participates in a covalent cross-link: Glycyl lysine isopeptide (Lys-Gly) (interchain with G-Cter in SUMO2). A phosphothreonine; by CDK2 mark is found at T443 and T447. Residues K450 and K485 each participate in a glycyl lysine isopeptide (Lys-Gly) (interchain with G-Cter in SUMO2) cross-link. Residues T490 and T497 each carry the phosphothreonine; by CDK2 modification. Glycyl lysine isopeptide (Lys-Gly) (interchain with G-Cter in SUMO2) cross-links involve residues K502 and K513. Residue T524 is modified to Phosphothreonine; by CDK2. Glycyl lysine isopeptide (Lys-Gly) (interchain with G-Cter in SUMO2) cross-links involve residues K527, K537, and K550. At S581 the chain carries Phosphoserine; by CDK2. Glycyl lysine isopeptide (Lys-Gly) (interchain with G-Cter in SUMO2) cross-links involve residues K588 and K600. Positions S603–P626 are disordered. The segment covering P607 to S620 has biased composition (low complexity). Glycyl lysine isopeptide (Lys-Gly) (interchain with G-Cter in SUMO2) cross-links involve residues K629, K643, and K652.

Component of the DREAM complex (also named LINC complex) at least composed of E2F4, E2F5, LIN9, LIN37, LIN52, LIN54, MYBL1, MYBL2, RBL1, RBL2, RBBP4, TFDP1 and TFDP2. The complex exists in quiescent cells where it represses cell cycle-dependent genes. It dissociates in S phase when LIN9, LIN37, LIN52 and LIN54 form a subcomplex that binds to MYBL2. Interacts with CCNF (via the Cyclin N-terminal domain). Post-translationally, phosphorylated by cyclin A/CDK2 during S-phase. Phosphorylation at Thr-524 is probably involved in transcriptional activity.

The protein localises to the nucleus. Transcription factor involved in the regulation of cell survival, proliferation, and differentiation. Transactivates the expression of the CLU gene. This chain is Myb-related protein B (Mybl2), found in Mus musculus (Mouse).